A 217-amino-acid polypeptide reads, in one-letter code: Acyl-homoserine-lactone synthase (217 aa).

The protein belongs to the autoinducer synthase family.

The enzyme catalyses a fatty acyl-[ACP] + S-adenosyl-L-methionine = an N-acyl-L-homoserine lactone + S-methyl-5'-thioadenosine + holo-[ACP] + H(+). Required for the synthesis of OHHL (N-(3-oxohexanoyl)-L-homoserine lactone), an autoinducer molecule which binds to ExpR and thus acts in virulence (soft rot disease) through the activation of genes for plant tissue macerating enzymes. This is Acyl-homoserine-lactone synthase (expI) from Pectobacterium parmentieri.